A 533-amino-acid chain; its full sequence is Multicopper oxidase CueO (533 aa).

The tat-type signal signal peptide spans Met-1 to Ala-28. 3 consecutive Plastocyanin-like domains span residues Gln-53–Ser-166, Pro-221–Asp-290, and Ala-416–Ser-532. Residues His-102, His-104, His-142, and His-144 each contribute to the Cu cation site. Residues His-458, His-461, His-463, His-514, Cys-515, His-516, and His-520 each coordinate Cu cation.

It belongs to the multicopper oxidase family. As to quaternary structure, monomer. The cofactor is Cu cation. Predicted to be exported by the Tat system. The position of the signal peptide cleavage has not been experimentally proven.

Its subcellular location is the periplasm. The catalysed reaction is 4 Cu(+) + O2 + 4 H(+) = 4 Cu(2+) + 2 H2O. Multicopper oxidase involved in copper homeostasis and copper tolerance under aerobic conditions. Is responsible for the oxidation of Cu(+) to the less harmful Cu(2+) in the periplasm, thereby preventing Cu(+) from entering the cytoplasm. The chain is Multicopper oxidase CueO (cueO) from Yersinia pestis.